The chain runs to 416 residues: S-adenosylmethionine synthase (416 aa).

Histidine 16 serves as a coordination point for ATP. Aspartate 18 contacts Mg(2+). Glutamate 44 contributes to the K(+) binding site. L-methionine-binding residues include glutamate 57 and glutamine 100. Residues 100–110 are flexible loop; the sequence is QSPDISQGVTA. ATP contacts are provided by residues 175-177, 251-252, aspartate 260, 266-267, alanine 283, and lysine 287; these read DGK, KF, and RK. Position 260 (aspartate 260) interacts with L-methionine. Lysine 291 is a binding site for L-methionine.

It belongs to the AdoMet synthase family. In terms of assembly, homotetramer; dimer of dimers. Requires Mg(2+) as cofactor. The cofactor is K(+).

Its subcellular location is the cytoplasm. It catalyses the reaction L-methionine + ATP + H2O = S-adenosyl-L-methionine + phosphate + diphosphate. It participates in amino-acid biosynthesis; S-adenosyl-L-methionine biosynthesis; S-adenosyl-L-methionine from L-methionine: step 1/1. Its function is as follows. Catalyzes the formation of S-adenosylmethionine (AdoMet) from methionine and ATP. The overall synthetic reaction is composed of two sequential steps, AdoMet formation and the subsequent tripolyphosphate hydrolysis which occurs prior to release of AdoMet from the enzyme. This Microcystis aeruginosa (strain NIES-843 / IAM M-2473) protein is S-adenosylmethionine synthase.